Here is a 287-residue protein sequence, read N- to C-terminus: Bifunctional protein FolD 1 (287 aa).

NADP(+)-binding positions include 170-172 (GRS) and S195.

Belongs to the tetrahydrofolate dehydrogenase/cyclohydrolase family. Homodimer.

The enzyme catalyses (6R)-5,10-methylene-5,6,7,8-tetrahydrofolate + NADP(+) = (6R)-5,10-methenyltetrahydrofolate + NADPH. It catalyses the reaction (6R)-5,10-methenyltetrahydrofolate + H2O = (6R)-10-formyltetrahydrofolate + H(+). It functions in the pathway one-carbon metabolism; tetrahydrofolate interconversion. Functionally, catalyzes the oxidation of 5,10-methylenetetrahydrofolate to 5,10-methenyltetrahydrofolate and then the hydrolysis of 5,10-methenyltetrahydrofolate to 10-formyltetrahydrofolate. This is Bifunctional protein FolD 1 from Streptomyces avermitilis (strain ATCC 31267 / DSM 46492 / JCM 5070 / NBRC 14893 / NCIMB 12804 / NRRL 8165 / MA-4680).